The following is a 378-amino-acid chain: Ribosomal RNA large subunit methyltransferase G (378 aa).

It belongs to the methyltransferase superfamily. RlmG family.

It is found in the cytoplasm. It carries out the reaction guanosine(1835) in 23S rRNA + S-adenosyl-L-methionine = N(2)-methylguanosine(1835) in 23S rRNA + S-adenosyl-L-homocysteine + H(+). Functionally, specifically methylates the guanine in position 1835 (m2G1835) of 23S rRNA. The sequence is that of Ribosomal RNA large subunit methyltransferase G from Citrobacter koseri (strain ATCC BAA-895 / CDC 4225-83 / SGSC4696).